We begin with the raw amino-acid sequence, 119 residues long: Ribonuclease P protein component (119 aa).

This sequence belongs to the RnpA family. Consists of a catalytic RNA component (M1 or rnpB) and a protein subunit.

It catalyses the reaction Endonucleolytic cleavage of RNA, removing 5'-extranucleotides from tRNA precursor.. Functionally, RNaseP catalyzes the removal of the 5'-leader sequence from pre-tRNA to produce the mature 5'-terminus. It can also cleave other RNA substrates such as 4.5S RNA. The protein component plays an auxiliary but essential role in vivo by binding to the 5'-leader sequence and broadening the substrate specificity of the ribozyme. In Bacillus cereus (strain ATCC 14579 / DSM 31 / CCUG 7414 / JCM 2152 / NBRC 15305 / NCIMB 9373 / NCTC 2599 / NRRL B-3711), this protein is Ribonuclease P protein component.